A 143-amino-acid polypeptide reads, in one-letter code: Transmembrane protein 207 (143 aa).

An N-terminal signal peptide occupies residues 1–29; that stretch reads MSTSSPFRVASKIVTAGCLCLPLFQRVLS. Residues 52–72 form a helical membrane-spanning segment; it reads IWFFLLIFLVVLLCGVVLFCL.

Interacts with WWOX.

The protein resides in the membrane. In Mus musculus (Mouse), this protein is Transmembrane protein 207.